The sequence spans 316 residues: B3 domain-containing protein Os04g0581400 (316 aa).

The tract at residues 1–100 (MEFATTSSRF…GSGGGGGGED (100 aa)) is disordered. The span at 13–36 (EEEEEEEGEQEMEQEQDEEEEEAE) shows a compositional bias: acidic residues. The segment covering 46–77 (TSAAAAATASSSSPTSVSPSATASAAASTSAS) has biased composition (low complexity). The span at 88-98 (GASGSGGGGGG) shows a compositional bias: gly residues. Positions 110–215 (FDKVVTPSDV…RLFIDWKRRA (106 aa)) form a DNA-binding region, TF-B3. Residues 239–290 (GGAGASSCRPRRPPRSTSITAFARASTSATSTPLCRRGSSSSSAPQGRGFIS) are disordered. The segment covering 253–270 (RSTSITAFARASTSATST) has biased composition (low complexity).

It is found in the nucleus. The sequence is that of B3 domain-containing protein Os04g0581400 from Oryza sativa subsp. japonica (Rice).